Reading from the N-terminus, the 84-residue chain is Cell division topological specificity factor (84 aa).

It belongs to the MinE family.

Functionally, prevents the cell division inhibition by proteins MinC and MinD at internal division sites while permitting inhibition at polar sites. This ensures cell division at the proper site by restricting the formation of a division septum at the midpoint of the long axis of the cell. The protein is Cell division topological specificity factor of Ectopseudomonas mendocina (strain ymp) (Pseudomonas mendocina).